A 392-amino-acid polypeptide reads, in one-letter code: 2,3-bisphosphoglycerate-independent phosphoglycerate mutase (392 aa).

It belongs to the BPG-independent phosphoglycerate mutase family. A-PGAM subfamily.

It carries out the reaction (2R)-2-phosphoglycerate = (2R)-3-phosphoglycerate. It functions in the pathway carbohydrate degradation; glycolysis; pyruvate from D-glyceraldehyde 3-phosphate: step 3/5. In terms of biological role, catalyzes the interconversion of 2-phosphoglycerate and 3-phosphoglycerate. In Methanothrix thermoacetophila (strain DSM 6194 / JCM 14653 / NBRC 101360 / PT) (Methanosaeta thermophila), this protein is 2,3-bisphosphoglycerate-independent phosphoglycerate mutase.